Consider the following 351-residue polypeptide: MATWLVTGRAGFIGGNFVLEAVSRGIRVVNLDALTYAGNLNTLASLEGNADHIFVKGDIGDGALVTRLLQEHQPDAVLNFAAESHVDRSIEGPGAFIQTNVVGTLALLEAVRDYWKALPDTRRDAFRFLHVSTDEVYGTLGETGKFTETTPYAPNSPYSASKAASDHLVRAFHHTYGLPVLTTNCSNNYGPYHFPEKLIPLVIAKALAGEPLPVYGDGKQVRDWLFVSDHCEAIRTVLAKGRVGETYNVGGNSERQNIEVVQAICALLDQHRPREDGKPRESQIAYVTDRPGHDRRYAIDASKLKDELGWEPAYTFEQGIAQTVDWYLTNQTWVQGVLDGSYRLERIGATV.

NAD(+) contacts are provided by residues Phe-12 to Ile-13, Asp-32 to Thr-35, Asp-58 to Ile-59, Phe-80 to Ser-84, and Thr-99. A substrate-binding site is contributed by Ser-84. Thr-133 contacts substrate. Asp-134 acts as the Proton donor in catalysis. Residues Glu-135 and Tyr-158 each act as proton acceptor in the active site. Tyr-158 to Lys-162 contributes to the NAD(+) binding site. Residue Asn-187 coordinates substrate. Position 188 (Asn-188) interacts with NAD(+). Substrate is bound by residues Lys-197–Leu-198, Pro-213–Tyr-215, Arg-222, Asn-257, and Asp-289–His-293.

Belongs to the NAD(P)-dependent epimerase/dehydratase family. dTDP-glucose dehydratase subfamily. As to quaternary structure, homodimer. NAD(+) is required as a cofactor.

The enzyme catalyses dTDP-alpha-D-glucose = dTDP-4-dehydro-6-deoxy-alpha-D-glucose + H2O. It participates in carbohydrate biosynthesis; dTDP-L-rhamnose biosynthesis. The protein operates within bacterial outer membrane biogenesis; LPS O-antigen biosynthesis. Catalyzes the dehydration of dTDP-D-glucose to form dTDP-6-deoxy-D-xylo-4-hexulose via a three-step process involving oxidation, dehydration and reduction. This Xanthomonas campestris pv. campestris (strain ATCC 33913 / DSM 3586 / NCPPB 528 / LMG 568 / P 25) protein is dTDP-glucose 4,6-dehydratase (rfbB).